Consider the following 1254-residue polypeptide: DNA polymerase gamma (1254 aa).

The segment covering 1125-1137 (RKKENRIDDENKK) has biased composition (basic and acidic residues). Disordered stretches follow at residues 1125-1145 (RKKE…KKNT) and 1202-1240 (YKKK…TNRN). Positions 1208 to 1217 (QARTASSSPI) are enriched in polar residues. Residues 1219 to 1231 (KTAKAVHSKKLPA) are compositionally biased toward basic residues.

Belongs to the DNA polymerase type-A family. Mg(2+) serves as cofactor.

The protein resides in the mitochondrion. It catalyses the reaction DNA(n) + a 2'-deoxyribonucleoside 5'-triphosphate = DNA(n+1) + diphosphate. Involved in the replication of mitochondrial DNA. The chain is DNA polymerase gamma (MIP1) from Saccharomyces cerevisiae (strain ATCC 204508 / S288c) (Baker's yeast).